The primary structure comprises 277 residues: Phosphonates import ATP-binding protein PhnC 2 (277 aa).

The ABC transporter domain maps to 3-251 (ISLNGISVQH…LLQALYAQHL (249 aa)). An ATP-binding site is contributed by 40–47 (GPSGAGKT).

This sequence belongs to the ABC transporter superfamily. Phosphonates importer (TC 3.A.1.9.1) family. The complex is composed of two ATP-binding proteins (PhnC), two transmembrane proteins (PhnE) and a solute-binding protein (PhnD).

It is found in the cell inner membrane. The enzyme catalyses phosphonate(out) + ATP + H2O = phosphonate(in) + ADP + phosphate + H(+). Its function is as follows. Part of the ABC transporter complex PhnCDE involved in phosphonates import. Responsible for energy coupling to the transport system. This chain is Phosphonates import ATP-binding protein PhnC 2, found in Albidiferax ferrireducens (strain ATCC BAA-621 / DSM 15236 / T118) (Rhodoferax ferrireducens).